The primary structure comprises 460 residues: Transcriptional regulatory protein UME1 (460 aa).

Residues 14 to 22 (NEEFKIWKK) carry the NEE-box motif. WD repeat units lie at residues 233–271 (PGIK…KPLW), 276–316 (SLDG…ALGD), 339–379 (FYSE…AIYN), and 411–451 (GENN…VLDG).

Component of the RPD3C(L) complex composed of at least ASH1, CTI6, DEP1, PHO23, RPD3, RXT2, RXT3, SAP30, SDS3, SIN3, UME1 and UME6. Component of the RPD3C(S) complex composed of at least EAF3, RCO1, RPD3, SIN3, and UME1. Interacts with RPD3.

Its subcellular location is the cytoplasm. It is found in the nucleus. In terms of biological role, catalytic component of the RPD3 histone deacetylase complexes RPD3C(L) and RPD3C(S) responsible for the deacetylation of lysine residues on the N-terminal part of the core histones (H2A, H2B, H3 and H4). Histone deacetylation gives a tag for epigenetic repression and plays an important role in transcriptional regulation, cell cycle progression and developmental events. This Saccharomyces cerevisiae (strain ATCC 204508 / S288c) (Baker's yeast) protein is Transcriptional regulatory protein UME1 (UME1).